A 317-amino-acid chain; its full sequence is (2S)-3-sulfopropanediol dehydratase activating enzyme (317 aa).

Residues 18-306 (HDGPGLRTEL…QMLAEYFNQR (289 aa)) form the Radical SAM core domain. [4Fe-4S] cluster is bound by residues cysteine 32, cysteine 36, cysteine 39, cysteine 58, cysteine 64, cysteine 67, cysteine 71, cysteine 92, cysteine 95, cysteine 98, and cysteine 102. An S-adenosyl-L-methionine-binding site is contributed by 38 to 40 (WCS). 4Fe-4S ferredoxin-type domains are found at residues 49-82 (AQVGVYKTKCISYKKCAACEETCPQENILQFTRG) and 83-112 (KLTSIERHDCTNCLACHNACPSDAIKLWGK). S-adenosyl-L-methionine is bound by residues glycine 142 and 191-193 (DIK).

Belongs to the organic radical-activating enzymes family. The cofactor is [4Fe-4S] cluster.

It carries out the reaction glycyl-[protein] + reduced [flavodoxin] + S-adenosyl-L-methionine = glycin-2-yl radical-[protein] + semiquinone [flavodoxin] + 5'-deoxyadenosine + L-methionine + H(+). The protein operates within organosulfur degradation; alkanesulfonate degradation. Its function is as follows. Involved in the degradation of the organosulfur compound 2(S)-dihydroxypropanesulfonate (DHPS). Catalyzes activation of the (2S)-3-sulfopropanediol dehydratase HpfG under anaerobic conditions by generation of an organic free radical on a glycine residue. The sequence is that of (2S)-3-sulfopropanediol dehydratase activating enzyme from Klebsiella oxytoca.